Reading from the N-terminus, the 584-residue chain is Endogenous retrovirus group FC1 Env polyprotein (584 aa).

A signal peptide spans 1–22 (MARPSPLCLLLLLTLLTPIVPS). Residues 23 to 518 (NSLLTEPPFR…GWWQSPLTTW (496 aa)) are Extracellular-facing. 2 N-linked (GlcNAc...) asparagine glycosylation sites follow: Asn-69 and Asn-247. Residues 251-254 (CFLC) carry the CXXC motif. N-linked (GlcNAc...) asparagine glycans are attached at residues Asn-272, Asn-276, Asn-308, Asn-313, Asn-322, Asn-334, Asn-342, and Asn-346. Positions 384–404 (AVFPPLVIGVSLTSSLVASGL) are fusion peptide. A CKS-17 motif is present at residues 449 to 465 (MQNRRALDLLTADKGGT). An intrachain disulfide couples Cys-466 to Cys-473. Residues 466-474 (CMFLGEECC) carry the CX6CC motif. Asn-478 carries an N-linked (GlcNAc...) asparagine glycan. A helical membrane pass occupies residues 519-539 (IIPFISPILIICLLLLIAPCV). At 540 to 584 (LKFIKNRISEVSRVTVNQMLLHPYSRLPTSEDHYDDALTQQEAAR) the chain is on the cytoplasmic side.

The protein belongs to the gamma type-C retroviral envelope protein family. HERV class-I F(c)1 env subfamily. The surface (SU) and transmembrane (TM) proteins form a heterodimer. SU and TM are attached by noncovalent interactions or by a labile interchain disulfide bond. In terms of processing, specific enzymatic cleavages in vivo yield the mature SU and TM proteins. Post-translationally, the CXXC motif is highly conserved across a broad range of retroviral envelope proteins. It is thought to participate in the formation of a labile disulfide bond possibly with the CX6CC motif present in the transmembrane protein. In terms of tissue distribution, low expression in skin, testis and trachea.

The protein resides in the virion. It localises to the cell membrane. Retroviral envelope proteins mediate receptor recognition and membrane fusion during early infection. Endogenous envelope proteins may have kept, lost or modified their original function during evolution. This endogenous envelope protein has lost its original fusogenic properties. Functionally, SU mediates receptor recognition. In terms of biological role, TM anchors the envelope heterodimer to the viral membrane through one transmembrane domain. The other hydrophobic domain, called fusion peptide, mediates fusion of the viral membrane with the target cell membrane. This Homo sapiens (Human) protein is Endogenous retrovirus group FC1 Env polyprotein (ERVFC1).